The following is a 136-amino-acid chain: Large ribosomal subunit protein uL16 (136 aa).

Belongs to the universal ribosomal protein uL16 family. In terms of assembly, part of the 50S ribosomal subunit.

Functionally, binds 23S rRNA and is also seen to make contacts with the A and possibly P site tRNAs. The chain is Large ribosomal subunit protein uL16 from Actinobacillus succinogenes (strain ATCC 55618 / DSM 22257 / CCUG 43843 / 130Z).